We begin with the raw amino-acid sequence, 162 residues long: NADH-quinone oxidoreductase subunit I (162 aa).

2 consecutive 4Fe-4S ferredoxin-type domains span residues 52-82 (LRRY…IEAG) and 93-122 (TRYD…EGPN). The [4Fe-4S] cluster site is built by Cys-62, Cys-65, Cys-68, Cys-72, Cys-102, Cys-105, Cys-108, and Cys-112.

This sequence belongs to the complex I 23 kDa subunit family. In terms of assembly, NDH-1 is composed of 14 different subunits. Subunits NuoA, H, J, K, L, M, N constitute the membrane sector of the complex. Requires [4Fe-4S] cluster as cofactor.

It localises to the cell inner membrane. It catalyses the reaction a quinone + NADH + 5 H(+)(in) = a quinol + NAD(+) + 4 H(+)(out). Its function is as follows. NDH-1 shuttles electrons from NADH, via FMN and iron-sulfur (Fe-S) centers, to quinones in the respiratory chain. The immediate electron acceptor for the enzyme in this species is believed to be ubiquinone. Couples the redox reaction to proton translocation (for every two electrons transferred, four hydrogen ions are translocated across the cytoplasmic membrane), and thus conserves the redox energy in a proton gradient. This is NADH-quinone oxidoreductase subunit I from Beijerinckia indica subsp. indica (strain ATCC 9039 / DSM 1715 / NCIMB 8712).